The primary structure comprises 73 residues: Large ribosomal subunit protein bL28 (73 aa).

This sequence belongs to the bacterial ribosomal protein bL28 family.

The protein is Large ribosomal subunit protein bL28 of Anaeromyxobacter dehalogenans (strain 2CP-1 / ATCC BAA-258).